Reading from the N-terminus, the 223-residue chain is UPF0441 protein KPK_0672 (223 aa).

The interval 165 to 223 (SYGAAQPGRTMNVPKTAMAPKPATTTTVTRGGFGESVAKQSTMQRSAAGSTSSSRSMGG) is disordered. Composition is skewed to low complexity over residues 177–193 (VPKT…TTVT) and 209–223 (RSAA…SMGG).

Belongs to the UPF0441 family.

The polypeptide is UPF0441 protein KPK_0672 (Klebsiella pneumoniae (strain 342)).